The primary structure comprises 900 residues: Sterol regulatory element-binding protein 1 (900 aa).

Positions 1–16 are enriched in low complexity; sequence MQSSIPSVSVSVASPA. Disordered regions lie at residues 1 to 49 and 206 to 263; these read MQSS…TKAS and TTCK…PKKT. A nuclear form of sre1; complements deletions of sre1 or scp1 region spans residues 1–440; the sequence is MQSSIPSVSV…FALPPFLMSP (440 aa). The Cytoplasmic portion of the chain corresponds to 1–442; that stretch reads MQSSIPSVSV…LPPFLMSPFT (442 aa). The span at 21-32 shows a compositional bias: polar residues; it reads TKASPDSKSPNS. The span at 35–49 shows a compositional bias: low complexity; the sequence is AIPSSSPLASSTKAS. The bHLH domain occupies 260-332; that stretch reads PKKTAHNMIE…AKATEYIRHL (73 aa). The helical transmembrane segment at 443-463 threads the bilayer; that stretch reads GTVLFNMLKIGVVLLGLFYLL. The Lumenal segment spans residues 464–509; that stretch reads HDNSLFKGFKGEKKSKVSTRSSMSPSSILFRKTVFEKYCLLDHSTS. The chain crosses the membrane as a helical span at residues 510 to 530; sequence TISLFFGLLIFTLKSAYGYLT. Topologically, residues 531-900 are cytoplasmic; the sequence is HRLSALYTSS…QEDLGYVSSA (370 aa). Residues serine 898 and serine 899 each carry the phosphoserine modification.

As to quaternary structure, forms a tight complex with scp1, composed of 4 copies of scp1 and 4 copies of sre1, which protects sre1 precursor from degradation by the proteasome. Post-translationally, in low oxygen or sterol conditions, undergoes proteolytic cleavage by rhomboid-type protease rbd2 and is released as soluble transcription factor from the membrane. Processed form is phosphorylated.

Its subcellular location is the endoplasmic reticulum membrane. It localises to the nucleus. Functionally, precursor of the transcription factor form (Processed sterol regulatory element-binding protein 1), which is embedded in the endoplasmic reticulum membrane. Low oxygen or sterol conditions promote processing of this form, releasing the transcription factor form that translocates into the nucleus and activates transcription of genes required for adaptation to anaerobic growth. In terms of biological role, transcriptional activator required for transcription of genes required for adaptation to anaerobic growth like those implicated in the nonrespiratory oxygen-consumptive biosynthetic pathways of sterol, heme, sphingolipid, and ubiquinone biosynthesis. May monitor oxygen levels through sterol synthesis steps which require oxygen. The sequence is that of Sterol regulatory element-binding protein 1 from Schizosaccharomyces pombe (strain 972 / ATCC 24843) (Fission yeast).